Consider the following 697-residue polypeptide: Potassium-transporting ATPase ATP-binding subunit (697 aa).

4 consecutive transmembrane segments (helical) span residues 55–75, 79–99, 245–265, and 271–291; these read PIMF…FLPS, SIPG…VLFA, LTLI…YLGF, and VLVA…LSAI. Asp324 (4-aspartylphosphate intermediate) is an active-site residue. Residues Asp361, Glu365, 393-400, and Lys412 each bind ATP; that span reads FKAETRMS. 2 residues coordinate Mg(2+): Asp535 and Asp539. 3 helical membrane passes run 605–625, 633–653, and 677–697; these read FAII…LNIM, AILS…PLAM, and GGVI…GLFI.

This sequence belongs to the cation transport ATPase (P-type) (TC 3.A.3) family. Type IA subfamily. In terms of assembly, the system is composed of three essential subunits: KdpA, KdpB and KdpC.

Its subcellular location is the cell membrane. The catalysed reaction is K(+)(out) + ATP + H2O = K(+)(in) + ADP + phosphate + H(+). Its function is as follows. Part of the high-affinity ATP-driven potassium transport (or Kdp) system, which catalyzes the hydrolysis of ATP coupled with the electrogenic transport of potassium into the cytoplasm. This subunit is responsible for energy coupling to the transport system and for the release of the potassium ions to the cytoplasm. This Bacillus cereus (strain B4264) protein is Potassium-transporting ATPase ATP-binding subunit.